Here is a 316-residue protein sequence, read N- to C-terminus: UDP-N-acetylenolpyruvoylglucosamine reductase (316 aa).

Positions 30–194 constitute an FAD-binding PCMH-type domain; the sequence is VGGEADYLVF…LSVKFALAPG (165 aa). Arg173 is a catalytic residue. Ser223 serves as the catalytic Proton donor. Glu293 is an active-site residue.

The protein belongs to the MurB family. FAD serves as cofactor.

Its subcellular location is the cytoplasm. It catalyses the reaction UDP-N-acetyl-alpha-D-muramate + NADP(+) = UDP-N-acetyl-3-O-(1-carboxyvinyl)-alpha-D-glucosamine + NADPH + H(+). It participates in cell wall biogenesis; peptidoglycan biosynthesis. Functionally, cell wall formation. The chain is UDP-N-acetylenolpyruvoylglucosamine reductase from Streptococcus pneumoniae serotype 2 (strain D39 / NCTC 7466).